The primary structure comprises 108 residues: UPF0060 membrane protein sll0793 (108 aa).

The next 4 membrane-spanning stretches (helical) occupy residues 7–27 (LYFV…WLWI), 32–52 (SVWL…VATL), 64–84 (YGGI…NVVV), and 86–106 (RLDW…MYAN).

The protein belongs to the UPF0060 family.

It localises to the cell inner membrane. The protein is UPF0060 membrane protein sll0793 of Synechocystis sp. (strain ATCC 27184 / PCC 6803 / Kazusa).